The sequence spans 577 residues: CDPK-related kinase 7 (577 aa).

The interval 1-38 is disordered; that stretch reads MGLCHGKPIEQQSKNLPISNEIEETPKNSSQKAKSSGF. Glycine 2 is lipidated: N-myristoyl glycine. In terms of domain architecture, Protein kinase spans 124–386; that stretch reads YEIDGEVGRG…AAQALCHPWL (263 aa). ATP contacts are provided by residues 130-138 and lysine 156; that span reads VGRGHFGYT. The active-site Proton acceptor is aspartate 252. Position 292 is a phosphoserine (serine 292). At serine 334 the chain carries Phosphoserine; by CPK1, CPK10 and CPK34. The autoinhibitory domain stretch occupies residues 391–421; that stretch reads ELKIPSDMIIYKLVKVYIMSSSLRKSALAAL. Residues 410 to 430 are calmodulin binding (CaMBD); that stretch reads SSSLRKSALAALAKTLTVPQL. 4 EF-hand domains span residues 428–464, 465–500, 501–540, and 543–572; these read PQLT…STEA, TKDS…VYQL, EAME…GPSV, and HVVL…VSSR. Residues serine 443, asparagine 445, tyrosine 447, lysine 484, glutamate 489, aspartate 520, asparagine 522, glutamate 529, aspartate 554, and lysine 556 each contribute to the Ca(2+) site. Serine 558 carries the phosphoserine modification.

The protein belongs to the protein kinase superfamily. Ser/Thr protein kinase family. CDPK subfamily. As to quaternary structure, binds calmodulin (CaM) in a calcium-dependent manner. Autophosphorylated.

It is found in the membrane. The enzyme catalyses L-seryl-[protein] + ATP = O-phospho-L-seryl-[protein] + ADP + H(+). It carries out the reaction L-threonyl-[protein] + ATP = O-phospho-L-threonyl-[protein] + ADP + H(+). Activated by calcium and calmodulin. Autophosphorylation may play an important role in the regulation of the kinase activity. Its function is as follows. May play a role in signal transduction pathways that involve calcium as a second messenger. This Arabidopsis thaliana (Mouse-ear cress) protein is CDPK-related kinase 7 (CRK7).